Reading from the N-terminus, the 330-residue chain is MADLIARLREDGIQKRVIQEGRGELPDFQDGTKATFHFRTLHSDNEGSVIDDSRTRGKPMELIVGKKFKLPVWETIVCTMREGEIAQFLCDIKHVVLYPLVAKSLRNIAEGKDPLEGQRHCCGIAQMHEHSSLGHADLDALQQNPQPLIFHIEMLKVESPGTYQQDPWAMTDEEKAKAVPVIHQEGNRLYREGQVKEAAAKYYDAIACLKNLQMKEQPGSPDWIQLDLQITPLLLNYCQCKLVAQEYYEVLDHCSSILNKYDDNVKAYFKRGKAHAAVWNAQEAQADFAKVLELDPALAPVVSRELRALETRIRQKDEEDKARFRGIFSH.

One can recognise a PPIase FKBP-type domain in the interval 31–121 (GTKATFHFRT…KDPLEGQRHC (91 aa)). Serine 43 is modified (phosphoserine). TPR repeat units follow at residues 179-212 (VPVI…LKNL), 231-264 (TPLL…YDDN), and 265-298 (VKAY…DPAL).

In terms of assembly, interacts with RET in the pituitary gland; this interaction prevents the formation of the AIP-survivin complex.

It is found in the cytoplasm. May play a positive role in AHR-mediated (aromatic hydrocarbon receptor) signaling, possibly by influencing its receptivity for ligand and/or its nuclear targeting. This is AH receptor-interacting protein (Aip) from Mus musculus (Mouse).